A 984-amino-acid polypeptide reads, in one-letter code: Mineralocorticoid receptor (984 aa).

Residues 1–602 (METKGYHSLP…STGSSRPSKI (602 aa)) form a modulating region. The span at 231 to 243 (QGTPLTCSPNVEN) shows a compositional bias: polar residues. Disordered stretches follow at residues 231–329 (QGTP…AAST) and 347–373 (GTSAGSSTLRDVVPSPDTQEKGAQEVP). Residues Ser250, Ser259, Ser283, Ser287, and Ser299 each carry the phosphoserine modification. Residues 259–291 (SPLSSPLSSMKSSISSPPSHCSVKSPVSSPNNV) show a composition bias toward low complexity. The span at 292-329 (TLRSSVSSPANINNSRCSVSSPSNTNNRSTLSSPAAST) shows a compositional bias: polar residues. Zn(2+) contacts are provided by Cys603, Cys606, Cys620, Cys623, Cys639, Cys645, Cys655, and Cys658. 2 consecutive NR C4-type zinc fingers follow at residues 603–623 (CLVCGDEASGCHYGVVTCGSC) and 639–663 (CAGRNDCIIDKIRRKNCPACRLQKC). Residues 603–668 (CLVCGDEASG…RLQKCLQAGM (66 aa)) constitute a DNA-binding region (nuclear receptor). The interval 669–725 (NLGARKSKKLGKLKGIHEEQPQQQQPPPPPPPPQSPEEGTTYIAPAKEPSVNTALVP) is hinge. A disordered region spans residues 684 to 710 (IHEEQPQQQQPPPPPPPPQSPEEGTTY). Positions 692–703 (QQPPPPPPPPQS) are enriched in pro residues. One can recognise an NR LBD domain in the interval 726 to 964 (QLSTISRALT…EFPAMLVEII (239 aa)). 21-hydroxyprogesterone is bound by residues Asn770 and Gln776. Positions 770 and 776 each coordinate aldosterone. The progesterone site is built by Asn770 and Gln776. The segment at 782-785 (KWAK) is important for coactivator binding. Arg817 and Thr945 together coordinate 21-hydroxyprogesterone. Aldosterone is bound by residues Arg817 and Thr945. Positions 817 and 945 each coordinate progesterone.

Belongs to the nuclear hormone receptor family. NR3 subfamily. As to quaternary structure, heteromultimeric cytoplasmic complex with HSP90, HSP70, and FKBP4, in the absence of ligand. After ligand binding, it translocates to the nucleus and binds to DNA as a homodimer and as a heterodimer with NR3C1. May interact with HSD11B2 in the absence of ligand. Binds the coactivators NCOA1, NCOA2, TIF1 and NRIP1. In terms of processing, phosphorylated. As to expression, ubiquitous. Highly expressed in distal tubules, convoluted tubules and cortical collecting duct in kidney, and in sweat glands. Detected at lower levels in cardiomyocytes, in epidermis and in colon enterocytes.

It is found in the cytoplasm. The protein resides in the nucleus. Its subcellular location is the endoplasmic reticulum membrane. Its function is as follows. Receptor for both mineralocorticoids (MC) such as aldosterone and glucocorticoids (GC) such as corticosterone or cortisol. Binds to mineralocorticoid response elements (MRE) and transactivates target genes. The effect of MC is to increase ion and water transport and thus raise extracellular fluid volume and blood pressure and lower potassium levels. The sequence is that of Mineralocorticoid receptor (NR3C2) from Homo sapiens (Human).